The chain runs to 338 residues: UPF0324 membrane protein HI_1643 (338 aa).

10 consecutive transmembrane segments (helical) span residues Pro5–Leu23, His33–Phe55, Gly62–Phe84, Ala94–Tyr116, Leu123–Val145, Val155–Trp177, Leu222–Thr239, Ile254–Leu273, Leu280–Ala302, and Pro312–Ile334.

Belongs to the UPF0324 family.

The protein localises to the cell membrane. This is UPF0324 membrane protein HI_1643 from Haemophilus influenzae (strain ATCC 51907 / DSM 11121 / KW20 / Rd).